The primary structure comprises 133 residues: Basic leucine zipper transcriptional factor ATF-like 3 (133 aa).

The segment at 1–68 (MSQGPPAGGV…EHESLEQENS (68 aa)) is disordered. 2 positions are modified to phosphoserine: S2 and S24. Over residues 11–24 (LQSSVAAPGNQPQS) the composition is skewed to polar residues. In terms of domain architecture, bZIP spans 28 to 91 (DDRKVRRREK…RHLTEALKEH (64 aa)). The basic motif stretch occupies residues 30-55 (RKVRRREKNRVAAQRSRKKQTQKSDK). Over residues 51-68 (QKSDKLHEEHESLEQENS) the composition is skewed to basic and acidic residues. Residues 56-84 (LHEEHESLEQENSVLRREIAKLKEELRHL) are leucine-zipper.

The protein belongs to the bZIP family. Heterodimer; heterodimerizes with JUN family proteins. Interacts with JUN. As to expression, ubiquitously expressed.

The protein resides in the nucleus. Functionally, AP-1 family transcription factor that controls the differentiation of CD8(+) thymic conventional dendritic cells in the immune system. Acts via the formation of a heterodimer with JUN family proteins that recognizes and binds DNA sequence 5'-TGA[CG]TCA-3' and regulates expression of target genes. Required for development of CD8-alpha(+) classical dendritic cells (cDCs) and related CD103(+) dendritic cells that cross-present antigens to CD8 T-cells and produce interleukin-12 (IL12) in response to pathogens. The sequence is that of Basic leucine zipper transcriptional factor ATF-like 3 (Batf3) from Rattus norvegicus (Rat).